The primary structure comprises 120 residues: YNHSHIHTQYFVTYVSFLLLFTSTSLNSPYLSSPVISTGQHIDVGDEDYHDGDDDVDYTDDVDDVDDPHGSPSQLLQGGYQRNRHYGGGTYHSGYYRPNKQHGNGYGGQYPKKYGSGYKH.

The disordered stretch occupies residues 41–120 (HIDVGDEDYH…PKKYGSGYKH (80 aa)). Acidic residues predominate over residues 45-66 (GDEDYHDGDDDVDYTDDVDDVD).

This sequence belongs to the immunogenic miracidial antigen family.

The sequence is that of Immunogenic miracidial antigen 5D (5D) from Schistosoma japonicum (Blood fluke).